A 542-amino-acid chain; its full sequence is Leucine-rich repeat-containing protein 56 (542 aa).

LRR repeat units lie at residues 94–115, 117–138, 139–160, 161–182, and 186–206; these read NLDQ…GTSL, HLQV…ASLP, ALKE…CLLE, QLEV…RYLQ, and RLAM…PGPT. One can recognise an LRRCT domain in the interval 207–250; it reads NKVPRGYNYRAEVRKLIPQLQVLDEVPAAHTGPPAPPRLSQDWL. Disordered stretches follow at residues 308-377, 396-475, and 507-542; these read LLSE…ADSS, LPYR…LQSR, and RLSP…PVPT. Residues 416 to 426 show a composition bias toward basic and acidic residues; sequence RVPEEQVHQAE. The span at 522-532 shows a compositional bias: low complexity; the sequence is PDAAARPPRAA.

It belongs to the LRRC56 family. In terms of assembly, interacts with IFT88.

The protein resides in the cell projection. It localises to the cilium. Functionally, required for the assembly of dynein arms. The protein is Leucine-rich repeat-containing protein 56 (LRRC56) of Homo sapiens (Human).